The chain runs to 30 residues: Trypsin inhibitor 4 (30 aa).

Disulfide bonds link cysteine 3–cysteine 20, cysteine 10–cysteine 22, and cysteine 16–cysteine 28.

Belongs to the protease inhibitor I7 (squash-type serine protease inhibitor) family.

The protein localises to the secreted. In terms of biological role, inhibits trypsin; probably participates in a plant defense mechanism. This chain is Trypsin inhibitor 4, found in Momordica charantia (Bitter gourd).